We begin with the raw amino-acid sequence, 289 residues long: 3-methyl-2-oxobutanoate hydroxymethyltransferase (289 aa).

Polar residues predominate over residues 1–15 (MSTTFQLDTSTSRAN). The segment at 1-20 (MSTTFQLDTSTSRANPTPAP) is disordered. Residues Asp-67 and Asp-106 each contribute to the Mg(2+) site. Residues 67–68 (DS), Asp-106, and Lys-136 each bind 3-methyl-2-oxobutanoate. Glu-138 provides a ligand contact to Mg(2+). Glu-205 functions as the Proton acceptor in the catalytic mechanism.

The protein belongs to the PanB family. Homodecamer; pentamer of dimers. Mg(2+) serves as cofactor.

It localises to the cytoplasm. The enzyme catalyses 3-methyl-2-oxobutanoate + (6R)-5,10-methylene-5,6,7,8-tetrahydrofolate + H2O = 2-dehydropantoate + (6S)-5,6,7,8-tetrahydrofolate. The protein operates within cofactor biosynthesis; (R)-pantothenate biosynthesis; (R)-pantoate from 3-methyl-2-oxobutanoate: step 1/2. Its function is as follows. Catalyzes the reversible reaction in which hydroxymethyl group from 5,10-methylenetetrahydrofolate is transferred onto alpha-ketoisovalerate to form ketopantoate. The protein is 3-methyl-2-oxobutanoate hydroxymethyltransferase of Novosphingobium aromaticivorans (strain ATCC 700278 / DSM 12444 / CCUG 56034 / CIP 105152 / NBRC 16084 / F199).